A 304-amino-acid chain; its full sequence is Acetaldehyde dehydrogenase 1 (304 aa).

11-14 (SGNI) is a binding site for NAD(+). Cys-130 (acyl-thioester intermediate) is an active-site residue. NAD(+) contacts are provided by residues 161-169 (SVGPGTRAN) and Asn-272.

It belongs to the acetaldehyde dehydrogenase family.

The enzyme catalyses acetaldehyde + NAD(+) + CoA = acetyl-CoA + NADH + H(+). This Azoarcus sp. (strain BH72) protein is Acetaldehyde dehydrogenase 1 (lapF).